The chain runs to 254 residues: Hemin import ATP-binding protein HmuV (254 aa).

The ABC transporter domain maps to 2-239; sequence LNINQVNINL…DTLSQVWHYD (238 aa). 34–41 contributes to the ATP binding site; it reads GPNGAGKS.

It belongs to the ABC transporter superfamily. Heme (hemin) importer (TC 3.A.1.14.5) family. As to quaternary structure, the complex is composed of two ATP-binding proteins (HmuV), two transmembrane proteins (HmuU) and a solute-binding protein (HmuT).

The protein resides in the cell inner membrane. Its function is as follows. Part of the ABC transporter complex HmuTUV involved in hemin import. Responsible for energy coupling to the transport system. This Shewanella denitrificans (strain OS217 / ATCC BAA-1090 / DSM 15013) protein is Hemin import ATP-binding protein HmuV.